A 215-amino-acid chain; its full sequence is Cytochrome b6 (215 aa).

A helical membrane pass occupies residues 32–52 (IFYCLGGVTLICFLVQFATGF). C35 provides a ligand contact to heme c. The heme b site is built by H86 and H100. The next 3 helical transmembrane spans lie at 90–110 (ASMMVLAMILHTFRVYLTGGF), 116–136 (LTWVTGVLLACLTVSFGVTGY), and 186–206 (AHTFVLPWLTVVFMLMHFLMI). Residues H187 and H202 each coordinate heme b.

This sequence belongs to the cytochrome b family. PetB subfamily. As to quaternary structure, the 4 large subunits of the cytochrome b6-f complex are cytochrome b6, subunit IV (17 kDa polypeptide, PetD), cytochrome f and the Rieske protein, while the 4 small subunits are PetG, PetL, PetM and PetN. The complex functions as a dimer. Heme b serves as cofactor. The cofactor is heme c.

The protein resides in the cell inner membrane. Component of the cytochrome b6-f complex, which mediates electron transfer between photosystem II (PSII) and photosystem I (PSI), cyclic electron flow around PSI, and state transitions. The protein is Cytochrome b6 of Gloeobacter violaceus (strain ATCC 29082 / PCC 7421).